Consider the following 180-residue polypeptide: Acireductone dioxygenase (180 aa).

4 residues coordinate Fe(2+): His-97, His-99, Glu-103, and His-141. 4 residues coordinate Ni(2+): His-97, His-99, Glu-103, and His-141.

This sequence belongs to the acireductone dioxygenase (ARD) family. In terms of assembly, monomer. Fe(2+) is required as a cofactor. The cofactor is Ni(2+).

The catalysed reaction is 1,2-dihydroxy-5-(methylsulfanyl)pent-1-en-3-one + O2 = 3-(methylsulfanyl)propanoate + CO + formate + 2 H(+). It catalyses the reaction 1,2-dihydroxy-5-(methylsulfanyl)pent-1-en-3-one + O2 = 4-methylsulfanyl-2-oxobutanoate + formate + 2 H(+). Its pathway is amino-acid biosynthesis; L-methionine biosynthesis via salvage pathway; L-methionine from S-methyl-5-thio-alpha-D-ribose 1-phosphate: step 5/6. Functionally, catalyzes 2 different reactions between oxygen and the acireductone 1,2-dihydroxy-3-keto-5-methylthiopentene (DHK-MTPene) depending upon the metal bound in the active site. Fe-containing acireductone dioxygenase (Fe-ARD) produces formate and 2-keto-4-methylthiobutyrate (KMTB), the alpha-ketoacid precursor of methionine in the methionine recycle pathway. Ni-containing acireductone dioxygenase (Ni-ARD) produces methylthiopropionate, carbon monoxide and formate, and does not lie on the methionine recycle pathway. The chain is Acireductone dioxygenase from Cronobacter sakazakii (strain ATCC BAA-894) (Enterobacter sakazakii).